Here is a 632-residue protein sequence, read N- to C-terminus: Phosphatidylinositol-3,5-bisphosphate 3-phosphatase MTMR8 (632 aa).

The region spanning Gly-126 to Tyr-500 is the Myotubularin phosphatase domain. Residues Asn-250, Asn-275, and Ile-276 each coordinate a 1,2-diacyl-sn-glycero-3-phospho-(1D-myo-inositol-3,5-bisphosphate). Residues Asn-250, Asn-275, and Ile-276 each coordinate a 1,2-diacyl-sn-glycero-3-phospho-(1D-myo-inositol-3-phosphate). The active-site Phosphocysteine intermediate is Cys-338. A 1,2-diacyl-sn-glycero-3-phospho-(1D-myo-inositol-3,5-bisphosphate) is bound by residues Ser-339, Asp-340, Gly-341, Trp-342, Asp-343, Arg-344, Lys-380, and Arg-384. Positions 339, 340, 341, 342, 343, and 344 each coordinate a 1,2-diacyl-sn-glycero-3-phospho-(1D-myo-inositol-3-phosphate). 2 residues coordinate phosphate: Ser-339 and Asp-340. The phosphate site is built by Trp-342, Asp-343, and Arg-344. Arg-384 provides a ligand contact to a 1,2-diacyl-sn-glycero-3-phospho-(1D-myo-inositol-3-phosphate). The interval Leu-545–Ser-632 is disordered. Over residues Glu-602 to Ser-632 the composition is skewed to basic and acidic residues.

It belongs to the protein-tyrosine phosphatase family. Non-receptor class myotubularin subfamily. Homodimer.

It is found in the nucleus envelope. The enzyme catalyses a 1,2-diacyl-sn-glycero-3-phospho-(1D-myo-inositol-3,5-bisphosphate) + H2O = a 1,2-diacyl-sn-glycero-3-phospho-(1D-myo-inositol-5-phosphate) + phosphate. It catalyses the reaction a 1,2-diacyl-sn-glycero-3-phospho-(1D-myo-inositol-3-phosphate) + H2O = a 1,2-diacyl-sn-glycero-3-phospho-(1D-myo-inositol) + phosphate. The catalysed reaction is 1,2-dioctanoyl-sn-glycero-3-phospho-(1D-myo-inositol-3,5-bisphosphate) + H2O = 1,2-dioctanoyl-sn-glycero-3-phospho-(1D-myo-inositol-5-phosphate) + phosphate. Functionally, lipid phosphatase that specifically dephosphorylates the D-3 position of phosphatidylinositol 3-phosphate and phosphatidylinositol 3,5-bisphosphate, generating phosphatidylinositol and phosphatidylinositol 5-phosphate. The polypeptide is Phosphatidylinositol-3,5-bisphosphate 3-phosphatase MTMR8 (mtmr8) (Danio rerio (Zebrafish)).